A 226-amino-acid polypeptide reads, in one-letter code: Holliday junction branch migration complex subunit RuvA (226 aa).

A domain I region spans residues 1–67 (MITSVYAKIE…AINKELYAFK (67 aa)). Residues 68-145 (SLKEKEWFKA…YLKNQIVVSD (78 aa)) form a domain II region. The tract at residues 146-167 (KVEPQIDDDEKIDDSKDLNDDE) is flexible linker. The domain III stretch occupies residues 168-226 (LLSEIVIEAIDCLISLGYKQEQIKTALAEIDLKNESINDSADLVAVIIKQIGLRTSEVS).

The protein belongs to the RuvA family. Homotetramer. Forms an RuvA(8)-RuvB(12)-Holliday junction (HJ) complex. HJ DNA is sandwiched between 2 RuvA tetramers; dsDNA enters through RuvA and exits via RuvB. An RuvB hexamer assembles on each DNA strand where it exits the tetramer. Each RuvB hexamer is contacted by two RuvA subunits (via domain III) on 2 adjacent RuvB subunits; this complex drives branch migration. In the full resolvosome a probable DNA-RuvA(4)-RuvB(12)-RuvC(2) complex forms which resolves the HJ.

It localises to the cytoplasm. Its function is as follows. The RuvA-RuvB-RuvC complex processes Holliday junction (HJ) DNA during genetic recombination and DNA repair, while the RuvA-RuvB complex plays an important role in the rescue of blocked DNA replication forks via replication fork reversal (RFR). RuvA specifically binds to HJ cruciform DNA, conferring on it an open structure. The RuvB hexamer acts as an ATP-dependent pump, pulling dsDNA into and through the RuvAB complex. HJ branch migration allows RuvC to scan DNA until it finds its consensus sequence, where it cleaves and resolves the cruciform DNA. This is Holliday junction branch migration complex subunit RuvA from Mycoplasmoides gallisepticum (strain R(low / passage 15 / clone 2)) (Mycoplasma gallisepticum).